The sequence spans 96 residues: Putative pterin-4-alpha-carbinolamine dehydratase (96 aa).

It belongs to the pterin-4-alpha-carbinolamine dehydratase family.

The catalysed reaction is (4aS,6R)-4a-hydroxy-L-erythro-5,6,7,8-tetrahydrobiopterin = (6R)-L-erythro-6,7-dihydrobiopterin + H2O. The polypeptide is Putative pterin-4-alpha-carbinolamine dehydratase (Prochlorococcus marinus (strain MIT 9303)).